A 547-amino-acid chain; its full sequence is Chaperonin GroEL (547 aa).

ATP is bound by residues 30–33, Lys51, 87–91, Gly415, 479–481, and Asp495; these read TLGP, DGTTT, and NAA.

This sequence belongs to the chaperonin (HSP60) family. In terms of assembly, forms a cylinder of 14 subunits composed of two heptameric rings stacked back-to-back. Interacts with the co-chaperonin GroES.

It localises to the cytoplasm. It catalyses the reaction ATP + H2O + a folded polypeptide = ADP + phosphate + an unfolded polypeptide.. Functionally, together with its co-chaperonin GroES, plays an essential role in assisting protein folding. The GroEL-GroES system forms a nano-cage that allows encapsulation of the non-native substrate proteins and provides a physical environment optimized to promote and accelerate protein folding. In Cupriavidus pinatubonensis (strain JMP 134 / LMG 1197) (Cupriavidus necator (strain JMP 134)), this protein is Chaperonin GroEL.